The chain runs to 144 residues: Large ribosomal subunit protein uL15 (144 aa).

Residues 1-52 (MRLNTLSPAAGSKPSKKRVGRGIGSGLGKTGGRGHKGQKSRSGGKVRAGFEG) form a disordered region. A compositionally biased stretch (gly residues) spans 21–31 (RGIGSGLGKTG). A compositionally biased stretch (basic residues) spans 32 to 44 (GRGHKGQKSRSGG).

It belongs to the universal ribosomal protein uL15 family. Part of the 50S ribosomal subunit.

Functionally, binds to the 23S rRNA. This is Large ribosomal subunit protein uL15 from Aliivibrio fischeri (strain ATCC 700601 / ES114) (Vibrio fischeri).